A 242-amino-acid chain; its full sequence is Demethylmenaquinone methyltransferase (242 aa).

S-adenosyl-L-methionine is bound by residues Thr-62, Asp-83, and 112–113; that span reads DV.

Belongs to the class I-like SAM-binding methyltransferase superfamily. MenG/UbiE family.

The enzyme catalyses a 2-demethylmenaquinol + S-adenosyl-L-methionine = a menaquinol + S-adenosyl-L-homocysteine + H(+). It functions in the pathway quinol/quinone metabolism; menaquinone biosynthesis; menaquinol from 1,4-dihydroxy-2-naphthoate: step 2/2. Functionally, methyltransferase required for the conversion of demethylmenaquinol (DMKH2) to menaquinol (MKH2). The protein is Demethylmenaquinone methyltransferase of Protochlamydia amoebophila (strain UWE25).